A 689-amino-acid chain; its full sequence is Glycine--tRNA ligase beta subunit (689 aa).

The protein belongs to the class-II aminoacyl-tRNA synthetase family. Tetramer of two alpha and two beta subunits.

The protein localises to the cytoplasm. It carries out the reaction tRNA(Gly) + glycine + ATP = glycyl-tRNA(Gly) + AMP + diphosphate. This chain is Glycine--tRNA ligase beta subunit, found in Shewanella putrefaciens (strain CN-32 / ATCC BAA-453).